A 143-amino-acid polypeptide reads, in one-letter code: MSLTAKDKTLVKTFWGKVKGKADAMGAEALGRMLVVYPQTKTYFAHWSDQSPGSEPVKHGKKTIMGAVGDAVGKIDNLLGGLSALSEVHATKLAIDPGNFKLLSHCLLVTFAVNYPTDFTAEVHVAVDKFLAAVSAALADKYR.

The residue at position 2 (Ser-2) is an N-acetylserine. In terms of domain architecture, Globin spans 2 to 143 (SLTAKDKTLV…VSAALADKYR (142 aa)). His-59 provides a ligand contact to O2. Residue His-89 coordinates heme b.

The protein belongs to the globin family. Heterotetramer of two alpha chains and two beta chains. Red blood cells.

Its function is as follows. Involved in oxygen transport from the gills to the various peripheral tissues. The sequence is that of Hemoglobin cathodic subunit alpha from Conger conger (Conger eel).